The chain runs to 341 residues: Tryptophan--tRNA ligase (341 aa).

Residues 11–13 (RPT) and 19–20 (GH) each bind ATP. Positions 12 to 20 (PTGKLHIGH) match the 'HIGH' region motif. Asp-140 is an L-tryptophan binding site. ATP contacts are provided by residues 152–154 (GTD), Leu-194, and 202–206 (KMSKS). The 'KMSKS' region signature appears at 202 to 206 (KMSKS).

Belongs to the class-I aminoacyl-tRNA synthetase family. Homodimer.

It is found in the cytoplasm. It carries out the reaction tRNA(Trp) + L-tryptophan + ATP = L-tryptophyl-tRNA(Trp) + AMP + diphosphate + H(+). Catalyzes the attachment of tryptophan to tRNA(Trp). The polypeptide is Tryptophan--tRNA ligase (Streptococcus pneumoniae serotype 4 (strain ATCC BAA-334 / TIGR4)).